A 387-amino-acid chain; its full sequence is MKLLVLLVTLLVLSWTSAEDVGDQEILQQHNEDNNHKSELGEAAPQRTDNETSQLGQETPTIRVARAYEFSSKSNLEWVRWNGHIPSNAVKISNTYVGREDYVCRVGCEAGYYTPKKGPSCFYPYGFTEQHSKMFHILVNRDNFEILEWKWKTGGEVPENAVKACRDLYVAKNKYGLGKLHQSHHVFYLPWKGTEYKYNEYYVLNVNMDVVEQKITNVRYNMKGVEVHKDKPETLRSTSVKNYQCREATKQVTLEKSTETSQSWDVSNSITLGVSTEVSAGIPNIADVSVAVSAETSVEISHGTSKTESTSHSLSVSATIPPNSSCSITMEGCTFKANIPFTGRLTRKYSNGKVTSSSVKGIYKKVQVGEIQAVLHRCDKIADAKPC.

An N-terminal signal peptide occupies residues 1–18 (MKLLVLLVTLLVLSWTSA). A propeptide spanning residues 19 to 46 (EDVGDQEILQQHNEDNNHKSELGEAAPQ) is cleaved from the precursor. A compositionally biased stretch (basic and acidic residues) spans 31–40 (NEDNNHKSEL). The segment at 31–57 (NEDNNHKSELGEAAPQRTDNETSQLGQ) is disordered.

It belongs to the natterin family. Post-translationally, contains 4 disulfide bonds. As to expression, expressed by the venom gland.

It is found in the secreted. Inhibited by tissue-kallikrein inhibitor TKI and trasylol. Plasma kallikrein inhibitor PKSI527 and classical inhibitors of serine-, metallo-, thiol- or aspartate-peptidases evokes a minor inhibition of the peptide digestion. In terms of biological role, shows nociceptive, edema-inducing and kininogenase activity with release of kallidin from low molecular weight kininogen. The cleavage occurs at Met-Lys bonds. In Thalassophryne nattereri (Copper Joe toadfish), this protein is Natterin-4.